The following is a 406-amino-acid chain: Cysteine desulfurase (406 aa).

The residue at position 226 (lysine 226) is an N6-(pyridoxal phosphate)lysine. The active-site Cysteine persulfide intermediate is the cysteine 364.

The protein belongs to the class-V pyridoxal-phosphate-dependent aminotransferase family. Csd subfamily. In terms of assembly, homodimer. Interacts with SufE and the SufBCD complex composed of SufB, SufC and SufD. The interaction with SufE is required to mediate the direct transfer of the sulfur atom from the S-sulfanylcysteine. Pyridoxal 5'-phosphate is required as a cofactor.

The protein localises to the cytoplasm. The enzyme catalyses (sulfur carrier)-H + L-cysteine = (sulfur carrier)-SH + L-alanine. It carries out the reaction L-selenocysteine + AH2 = hydrogenselenide + L-alanine + A + H(+). The protein operates within cofactor biosynthesis; iron-sulfur cluster biosynthesis. Its function is as follows. Cysteine desulfurases mobilize the sulfur from L-cysteine to yield L-alanine, an essential step in sulfur metabolism for biosynthesis of a variety of sulfur-containing biomolecules. Component of the suf operon, which is activated and required under specific conditions such as oxidative stress and iron limitation. Acts as a potent selenocysteine lyase in vitro, that mobilizes selenium from L-selenocysteine. Selenocysteine lyase activity is however unsure in vivo. This chain is Cysteine desulfurase, found in Escherichia coli (strain K12 / MC4100 / BW2952).